Consider the following 418-residue polypeptide: Serine hydroxymethyltransferase (418 aa).

(6S)-5,6,7,8-tetrahydrofolate-binding positions include Leu120 and 124–126 (GHL). Lys229 bears the N6-(pyridoxal phosphate)lysine mark.

Belongs to the SHMT family. As to quaternary structure, homodimer. It depends on pyridoxal 5'-phosphate as a cofactor.

The protein localises to the cytoplasm. The catalysed reaction is (6R)-5,10-methylene-5,6,7,8-tetrahydrofolate + glycine + H2O = (6S)-5,6,7,8-tetrahydrofolate + L-serine. It participates in one-carbon metabolism; tetrahydrofolate interconversion. Its pathway is amino-acid biosynthesis; glycine biosynthesis; glycine from L-serine: step 1/1. Catalyzes the reversible interconversion of serine and glycine with tetrahydrofolate (THF) serving as the one-carbon carrier. This reaction serves as the major source of one-carbon groups required for the biosynthesis of purines, thymidylate, methionine, and other important biomolecules. Also exhibits THF-independent aldolase activity toward beta-hydroxyamino acids, producing glycine and aldehydes, via a retro-aldol mechanism. This chain is Serine hydroxymethyltransferase, found in Myxococcus xanthus (strain DK1622).